We begin with the raw amino-acid sequence, 364 residues long: Probable protein phosphatase methylesterase 1 (364 aa).

Residues 1 to 53 (MSDDKLDTLPDLQSETSHVTTPHRQNDLLRQAVTHGRPPPVPSTSTSGKKREM) form a disordered region. The span at 11–23 (DLQSETSHVTTPH) shows a compositional bias: polar residues. Active-site residues include Ser164, Asp190, and His316.

Belongs to the AB hydrolase superfamily.

The catalysed reaction is [phosphatase 2A protein]-C-terminal L-leucine methyl ester + H2O = [phosphatase 2A protein]-C-terminal L-leucine + methanol + H(+). Demethylates proteins that have been reversibly carboxymethylated. This chain is Probable protein phosphatase methylesterase 1, found in Caenorhabditis elegans.